Reading from the N-terminus, the 721-residue chain is Tripartite terminase subunit 1 (721 aa).

The C3H1-type zinc-finger motif lies at 189–217 (CLKCYEELSLVPNQGKSIRKRLAGKFCNH). Residue 625-632 (YNDVFGKQ) participates in ATP binding.

Belongs to the herpesviridae TRM1 protein family. In terms of assembly, associates with TRM2 and TRM3 to form the tripartite terminase complex. Interacts with portal protein.

Its subcellular location is the host nucleus. In terms of biological role, component of the molecular motor that translocates viral genomic DNA in empty capsid during DNA packaging. Forms a tripartite terminase complex together with TRM2 and TRM3 in the host cytoplasm. Once the complex reaches the host nucleus, it interacts with the capsid portal vertex. This portal forms a ring in which genomic DNA is translocated into the capsid. TRM1 carries an endonuclease activity that plays an important role for the cleavage of concatemeric viral DNA into unit length genomes. The sequence is that of Tripartite terminase subunit 1 from Homo sapiens (Human).